A 114-amino-acid polypeptide reads, in one-letter code: Probable gas vesicle protein J2 (114 aa).

The span at 1–10 shows a compositional bias: basic and acidic residues; sequence MTDLDHRYPG. The tract at residues 1 to 21 is disordered; the sequence is MTDLDHRYPGEETEPYGPPSG.

It belongs to the gas vesicle GvpA family. In terms of assembly, interacts with GvpA.

Its subcellular location is the gas vesicle. Functionally, a minor component of the gas vesicle, might be involved in nucleating gas vesicle formation. Gas vesicles (GV) are hollow, gas filled proteinaceous nanostructures. It is not clear what function GVs perform in soil bacteria. This Streptomyces coelicolor (strain ATCC BAA-471 / A3(2) / M145) protein is Probable gas vesicle protein J2.